Consider the following 233-residue polypeptide: Lysoplasmalogenase TMEM86B (233 aa).

The Cytoplasmic portion of the chain corresponds to 1–30 (MPCCDPYPWIGLNVGRLSSFPLLKYPQVRR). Residues 31–47 (WLAPFIVACSLYFLLWI) traverse the membrane as a helical segment. Residues 48 to 53 (PEDQPS) are Extracellular-facing. A helical transmembrane segment spans residues 54–75 (WVSALVKCQPILCLVLFLWAVA). Topologically, residues 76–81 (PGGSYT) are cytoplasmic. The chain crosses the membrane as a helical span at residues 82–100 (WLLQGALTCSAVGDACLIW). The Extracellular segment spans residues 101-106 (PEAFFY). Residues 107 to 124 (GMAVFSVAHLLYLWAFGL) traverse the membrane as a helical segment. Over 125-130 (SPLQPG) the chain is Cytoplasmic. Residues 131–147 (LLLCTTLASLTYYSFLL) traverse the membrane as a helical segment. Topologically, residues 148–153 (LHLEPN) are extracellular. The helical transmembrane segment at 154–170 (MVLPVAAYGLILNTMLW) threads the bilayer. Over 171 to 178 (RGLVLGRS) the chain is Cytoplasmic. The chain crosses the membrane as a helical span at residues 179–195 (AGWGAVLFIFSDGVLAW). Residues 196–206 (DTFVYTLPFAR) lie on the Extracellular side of the membrane. A helical membrane pass occupies residues 207 to 225 (LVTMSTYYAAQLLLTLSAL). Over 226–233 (RSPGLKTH) the chain is Cytoplasmic.

The protein belongs to the TMEM86 family. As to quaternary structure, homodimer.

It is found in the endoplasmic reticulum membrane. It localises to the cytoplasm. It carries out the reaction a 1-O-(1Z-alkenyl)-sn-glycero-3-phosphocholine + H2O = a 2,3-saturated aldehyde + sn-glycerol 3-phosphocholine. It catalyses the reaction a 1-O-(1Z-alkenyl)-sn-glycero-3-phosphoethanolamine + H2O = a 2,3-saturated aldehyde + sn-glycero-3-phosphoethanolamine. With respect to regulation, competitively inhibited by lysophosphatidic acid. Catalyzes the hydrolysis of the vinyl ether bond of choline or ethanolamine lysoplasmalogens, forming fatty aldehyde and glycerophosphocholine or glycerophosphoethanolamine, respectively and is specific for the sn-2-deacylated (lyso) form of plasmalogen. This is Lysoplasmalogenase TMEM86B (Tmem86b) from Rattus norvegicus (Rat).